Reading from the N-terminus, the 364-residue chain is Cell division protein FtsZ 1 (364 aa).

GTP contacts are provided by residues 47-48, 97-99, 134-136, glutamate 165, arginine 169, and aspartate 212; these read GA, AGG, and GTG.

It belongs to the FtsZ family. Homodimer. Polymerizes to form a dynamic ring structure in a strictly GTP-dependent manner. Interacts directly with several other division proteins.

Its subcellular location is the cytoplasm. In terms of biological role, essential cell division protein that forms a contractile ring structure (Z ring) at the future cell division site. The regulation of the ring assembly controls the timing and the location of cell division. One of the functions of the FtsZ ring is to recruit other cell division proteins to the septum to produce a new cell wall between the dividing cells. Binds GTP and shows GTPase activity. In Methanocaldococcus jannaschii (strain ATCC 43067 / DSM 2661 / JAL-1 / JCM 10045 / NBRC 100440) (Methanococcus jannaschii), this protein is Cell division protein FtsZ 1.